The following is a 54-amino-acid chain: Photosystem II reaction center protein L (54 aa).

Residues 33–53 (SLFWGLLLIFVLAVLFSSYIF) traverse the membrane as a helical segment.

Belongs to the PsbL family. In terms of assembly, PSII is composed of 1 copy each of membrane proteins PsbA, PsbB, PsbC, PsbD, PsbE, PsbF, PsbH, PsbI, PsbJ, PsbK, PsbL, PsbM, PsbT, PsbX, PsbY, PsbZ, Psb30/Ycf12, at least 3 peripheral proteins of the oxygen-evolving complex and a large number of cofactors. It forms dimeric complexes.

Its subcellular location is the plastid. It is found in the chloroplast thylakoid membrane. Functionally, one of the components of the core complex of photosystem II (PSII). PSII is a light-driven water:plastoquinone oxidoreductase that uses light energy to abstract electrons from H(2)O, generating O(2) and a proton gradient subsequently used for ATP formation. It consists of a core antenna complex that captures photons, and an electron transfer chain that converts photonic excitation into a charge separation. This subunit is found at the monomer-monomer interface and is required for correct PSII assembly and/or dimerization. In Stigeoclonium helveticum (Green alga), this protein is Photosystem II reaction center protein L.